Consider the following 156-residue polypeptide: Ribosomal RNA large subunit methyltransferase H (156 aa).

Residues Leu72, Gly104, and 123-128 (LGPMTF) contribute to the S-adenosyl-L-methionine site.

The protein belongs to the RNA methyltransferase RlmH family. Homodimer.

The protein resides in the cytoplasm. It catalyses the reaction pseudouridine(1915) in 23S rRNA + S-adenosyl-L-methionine = N(3)-methylpseudouridine(1915) in 23S rRNA + S-adenosyl-L-homocysteine + H(+). In terms of biological role, specifically methylates the pseudouridine at position 1915 (m3Psi1915) in 23S rRNA. This Nitratidesulfovibrio vulgaris (strain ATCC 29579 / DSM 644 / CCUG 34227 / NCIMB 8303 / VKM B-1760 / Hildenborough) (Desulfovibrio vulgaris) protein is Ribosomal RNA large subunit methyltransferase H.